Reading from the N-terminus, the 61-residue chain is uncharacterized protein (61 aa).

The disordered stretch occupies residues 38–61 (TPRPFTPGLADPRRLGPRRVQAAQ).

This is an uncharacterized protein from Homo sapiens (Human).